The chain runs to 335 residues: Probable peptide ABC transporter ATP-binding protein y4tR (335 aa).

The 250-residue stretch at 15–264 (VRDLETHFYG…PTHPYTRALM (250 aa)) folds into the ABC transporter domain. 49 to 56 (GESGCGKS) is an ATP binding site.

It belongs to the ABC transporter superfamily.

Its subcellular location is the cell inner membrane. Its function is as follows. Probably part of a binding-protein-dependent transport system y4tOPQRS for a peptide. Probably responsible for energy coupling to the transport system. The protein is Probable peptide ABC transporter ATP-binding protein y4tR of Sinorhizobium fredii (strain NBRC 101917 / NGR234).